A 325-amino-acid polypeptide reads, in one-letter code: Golgi to ER traffic protein 4 homolog B (325 aa).

2 disordered regions span residues 1-22 and 306-325; these read MAAA…GGVQ and SGED…IELD. Residues 307-317 are compositionally biased toward acidic residues; sequence GEDDDVEDGQE.

The protein belongs to the GET4 family. Component of the bag6/bat3 complex.

Its subcellular location is the cytoplasm. The protein localises to the cytosol. Its function is as follows. As part of a cytosolic protein quality control complex, the bag6/bat3 complex, maintains misfolded and hydrophobic patches-containing proteins in a soluble state and participates in their proper delivery to the endoplasmic reticulum or alternatively can promote their sorting to the proteasome where they undergo degradation. The bag6/bat3 complex is involved in the post-translational delivery of tail-anchored/type II transmembrane proteins to the endoplasmic reticulum membrane. Similarly, the bag6/bat3 complex also functions as a sorting platform for proteins of the secretory pathway that are mislocalized to the cytosol either delivering them to the proteasome for degradation or to the endoplasmic reticulum. The bag6/bat3 complex also plays a role in the endoplasmic reticulum-associated degradation (ERAD), a quality control mechanism that eliminates unwanted proteins of the endoplasmic reticulum through their retrotranslocation to the cytosol and their targeting to the proteasome. It maintains these retrotranslocated proteins in an unfolded yet soluble state condition in the cytosol to ensure their proper delivery to the proteasome. The polypeptide is Golgi to ER traffic protein 4 homolog B (get4-b) (Xenopus laevis (African clawed frog)).